The following is a 246-amino-acid chain: Orotidine 5'-phosphate decarboxylase (246 aa).

Substrate contacts are provided by residues D18, K39, 66 to 75, T130, R192, Q201, G221, and R222; that span reads DLKFHDIPAT. K68 serves as the catalytic Proton donor.

The protein belongs to the OMP decarboxylase family. Type 1 subfamily. In terms of assembly, homodimer.

The enzyme catalyses orotidine 5'-phosphate + H(+) = UMP + CO2. Its pathway is pyrimidine metabolism; UMP biosynthesis via de novo pathway; UMP from orotate: step 2/2. Functionally, catalyzes the decarboxylation of orotidine 5'-monophosphate (OMP) to uridine 5'-monophosphate (UMP). The polypeptide is Orotidine 5'-phosphate decarboxylase (Parasynechococcus marenigrum (strain WH8102)).